Reading from the N-terminus, the 275-residue chain is Large ribosomal subunit protein uL2 (275 aa).

Positions 224–257 (AMNPIDHPHGGGEGRTAAGRDPVSPWGTPTKGFR) are disordered.

It belongs to the universal ribosomal protein uL2 family. In terms of assembly, part of the 50S ribosomal subunit. Forms a bridge to the 30S subunit in the 70S ribosome.

In terms of biological role, one of the primary rRNA binding proteins. Required for association of the 30S and 50S subunits to form the 70S ribosome, for tRNA binding and peptide bond formation. It has been suggested to have peptidyltransferase activity; this is somewhat controversial. Makes several contacts with the 16S rRNA in the 70S ribosome. This chain is Large ribosomal subunit protein uL2, found in Burkholderia mallei (strain NCTC 10247).